The primary structure comprises 452 residues: Adenylosuccinate synthetase 2 (452 aa).

GTP is bound by residues glycine 19–arginine 25 and glycine 47–threonine 49. Aspartate 20 serves as the catalytic Proton acceptor. Mg(2+) is bound by residues aspartate 20 and glycine 47. IMP contacts are provided by residues aspartate 20–lysine 23, asparagine 45–histidine 48, threonine 131, arginine 145, glutamine 223, threonine 238, and arginine 338. The active-site Proton donor is the histidine 48. Threonine 334–arginine 340 serves as a coordination point for substrate. GTP-binding positions include arginine 340, lysine 366–aspartate 368, and glycine 437–glycine 439.

It belongs to the adenylosuccinate synthetase family. In terms of assembly, homodimer. It depends on Mg(2+) as a cofactor.

The protein localises to the cytoplasm. The enzyme catalyses IMP + L-aspartate + GTP = N(6)-(1,2-dicarboxyethyl)-AMP + GDP + phosphate + 2 H(+). The protein operates within purine metabolism; AMP biosynthesis via de novo pathway; AMP from IMP: step 1/2. In terms of biological role, plays an important role in the de novo pathway of purine nucleotide biosynthesis. Catalyzes the first committed step in the biosynthesis of AMP from IMP. The chain is Adenylosuccinate synthetase 2 from Cupriavidus pinatubonensis (strain JMP 134 / LMG 1197) (Cupriavidus necator (strain JMP 134)).